The following is a 67-amino-acid chain: Penaeidin-4d (67 aa).

Positions Met-1–Gly-19 are cleaved as a signal peptide. 3 cysteine pairs are disulfide-bonded: Cys-42–Cys-56, Cys-45–Cys-63, and Cys-57–Cys-64. Position 66 is a leucine amide (Leu-66).

This sequence belongs to the penaeidin family.

The protein localises to the cytoplasmic granule. In terms of biological role, antibacterial and antifungal activity. Presents chitin-binding activity. This Penaeus setiferus (Atlantic white shrimp) protein is Penaeidin-4d.